We begin with the raw amino-acid sequence, 264 residues long: 3-methyl-2-oxobutanoate hydroxymethyltransferase 1 (264 aa).

2 residues coordinate Mg(2+): D45 and D84. 3-methyl-2-oxobutanoate contacts are provided by residues D45–S46, D84, and K112. E114 is a Mg(2+) binding site. E181 (proton acceptor) is an active-site residue.

The protein belongs to the PanB family. In terms of assembly, homodecamer; pentamer of dimers. Requires Mg(2+) as cofactor.

It localises to the cytoplasm. It catalyses the reaction 3-methyl-2-oxobutanoate + (6R)-5,10-methylene-5,6,7,8-tetrahydrofolate + H2O = 2-dehydropantoate + (6S)-5,6,7,8-tetrahydrofolate. Its pathway is cofactor biosynthesis; (R)-pantothenate biosynthesis; (R)-pantoate from 3-methyl-2-oxobutanoate: step 1/2. Catalyzes the reversible reaction in which hydroxymethyl group from 5,10-methylenetetrahydrofolate is transferred onto alpha-ketoisovalerate to form ketopantoate. The protein is 3-methyl-2-oxobutanoate hydroxymethyltransferase 1 of Aliivibrio fischeri (strain ATCC 700601 / ES114) (Vibrio fischeri).